A 343-amino-acid chain; its full sequence is tRNA N6-adenosine threonylcarbamoyltransferase (343 aa).

Residues His-120 and His-124 each contribute to the Fe cation site. Substrate-binding positions include 142–146, Asp-175, Gly-188, Asp-192, and Asn-281; that span reads VVSGG. Asp-310 lines the Fe cation pocket.

Belongs to the KAE1 / TsaD family. It depends on Fe(2+) as a cofactor.

The protein localises to the cytoplasm. The catalysed reaction is L-threonylcarbamoyladenylate + adenosine(37) in tRNA = N(6)-L-threonylcarbamoyladenosine(37) in tRNA + AMP + H(+). Functionally, required for the formation of a threonylcarbamoyl group on adenosine at position 37 (t(6)A37) in tRNAs that read codons beginning with adenine. Is involved in the transfer of the threonylcarbamoyl moiety of threonylcarbamoyl-AMP (TC-AMP) to the N6 group of A37, together with TsaE and TsaB. TsaD likely plays a direct catalytic role in this reaction. The sequence is that of tRNA N6-adenosine threonylcarbamoyltransferase from Bacillus cereus (strain ATCC 14579 / DSM 31 / CCUG 7414 / JCM 2152 / NBRC 15305 / NCIMB 9373 / NCTC 2599 / NRRL B-3711).